Here is a 346-residue protein sequence, read N- to C-terminus: GTP-binding RHO-like protein (346 aa).

Basic residues predominate over residues 1–10 (MTPNGSRRHS). The disordered stretch occupies residues 1–25 (MTPNGSRRHSAYMGSPRSQHSSTME). The segment covering 16-25 (PRSQHSSTME) has biased composition (polar residues). 82 to 89 (GDGGCGKT) lines the GTP pocket. The short motif at 104-112 (YVPTVFENY) is the Effector region element. GTP contacts are provided by residues 130–134 (DTAGQ) and 188–191 (TKSD). Residues 259–294 (LGGSNGGSGNHSRHHSRNYSNVSNNRRGHLKNTSYD) form a disordered region. C343 bears the Cysteine methyl ester mark. C343 carries the S-geranylgeranyl cysteine lipid modification. Residues 344–346 (VIL) constitute a propeptide, removed in mature form.

It belongs to the small GTPase superfamily. Rho family.

The protein resides in the cell membrane. The protein is GTP-binding RHO-like protein (CRL1) of Candida albicans (strain WO-1) (Yeast).